Here is a 128-residue protein sequence, read N- to C-terminus: CD59 glycoprotein (128 aa).

The first 25 residues, 1 to 25 (MGIQGGSVLFGLLLVLAVFCHSGHS), serve as a signal peptide directing secretion. The UPAR/Ly6 domain occupies 26-108 (LQCYNCPNPT…QLENGGTSLS (83 aa)). 3 cysteine pairs are disulfide-bonded: Cys-28/Cys-51, Cys-31/Cys-38, and Cys-44/Cys-64. Asn-43 is a glycosylation site (N-linked (GlcNAc...) asparagine). N-linked (Glc) (glycation) lysine glycosylation is present at Lys-66. Disulfide bonds link Cys-70/Cys-88 and Cys-89/Cys-94. Residues Thr-76 and Thr-77 are each glycosylated (O-linked (GalNAc...) threonine). Asn-102 carries the GPI-anchor amidated asparagine lipid modification. A propeptide spans 103–128 (GGTSLSEKTVLLLVTPFLAAAWSLHP) (removed in mature form).

Interacts with T-cell surface antigen CD2. N- and O-glycosylated. The N-glycosylation mainly consists of a family of biantennary complex-type structures with and without lactosamine extensions and outer arm fucose residues. Also significant amounts of triantennary complexes (22%). Variable sialylation also present in the Asn-43 oligosaccharide. The predominant O-glycans are mono-sialylated forms of the disaccharide, Gal-beta-1,3GalNAc, and their sites of attachment are probably on Thr-76 and Thr-77. The GPI-anchor of soluble urinary CD59 has no inositol-associated phospholipid, but is composed of seven different GPI-anchor variants of one or more monosaccharide units. Major variants contain sialic acid, mannose and glucosamine. Sialic acid linked to an N-acetylhexosamine-galactose arm is present in two variants. Post-translationally, glycated. Glycation is found in diabetic subjects, but only at minimal levels in nondiabetic subjects. Glycated CD59 lacks MAC-inhibitory function and confers to vascular complications of diabetes.

It is found in the cell membrane. Its subcellular location is the secreted. Its function is as follows. Potent inhibitor of the complement membrane attack complex (MAC) action, which protects human cells from damage during complement activation. Acts by binding to the beta-haipins of C8 (C8A and C8B) components of the assembling MAC, forming an intermolecular beta-sheet that prevents incorporation of the multiple copies of C9 required for complete formation of the osmolytic pore. Functionally, the soluble form from urine retains its specific complement binding activity, but exhibits greatly reduced ability to inhibit complement membrane attack complex (MAC) assembly on cell membranes. The polypeptide is CD59 glycoprotein (Homo sapiens (Human)).